A 417-amino-acid chain; its full sequence is Voltage-gated ClC-type chloride channel ClcB (417 aa).

11 helical membrane passes run 5–25 (LLIATIIGILAALAVAGFRHA), 54–74 (LITPAVGGLAAGALLWGWQKM), 146–166 (LWIACGAAAGMASAYHAPLAG), 168–188 (LFIAEILFGTLMLASLGPVVI), 190–210 (AVVALLTTHLLSGGNALLYTV), 222–242 (AMIISTGLVAGVCGPLFMWLM), 258–278 (WQLALGGFIVGLLSLLTPAVW), 288–308 (FLLSPPLLSVIAGIFICKLLA), 316–336 (GAPGGVFTPTLFIGLSIGMLY), 339–359 (MWGFWLPGADEMAILLGLTGM), and 380–400 (MTGEYRLLPGLLIACVVASVL).

The protein belongs to the chloride channel (TC 2.A.49) family. ClcB subfamily.

The protein localises to the cell inner membrane. In terms of biological role, probably acts as an electrical shunt for an outwardly-directed proton pump that is linked to amino acid decarboxylation, as part of the extreme acid resistance (XAR) response. The chain is Voltage-gated ClC-type chloride channel ClcB from Citrobacter koseri (strain ATCC BAA-895 / CDC 4225-83 / SGSC4696).